A 325-amino-acid polypeptide reads, in one-letter code: uncharacterized protein (325 aa).

2 disordered regions span residues 32 to 65 and 99 to 152; these read LSTP…VPPI and GDSL…ASSG. One can recognise a Globin domain in the interval 153–291; it reads LVPSLNRLRI…LFTGVRDGYY (139 aa).

This is an uncharacterized protein from Caenorhabditis elegans.